The sequence spans 460 residues: Cysteine--tRNA ligase (460 aa).

Position 28 (Cys28) interacts with Zn(2+). The short motif at 30-40 (MTVYDYCHLGH) is the 'HIGH' region element. 3 residues coordinate Zn(2+): Cys209, His234, and Glu238. The 'KMSKS' region motif lies at 266 to 270 (KMSKS). Lys269 contacts ATP.

This sequence belongs to the class-I aminoacyl-tRNA synthetase family. Monomer. Zn(2+) serves as cofactor.

It is found in the cytoplasm. It carries out the reaction tRNA(Cys) + L-cysteine + ATP = L-cysteinyl-tRNA(Cys) + AMP + diphosphate. The protein is Cysteine--tRNA ligase of Pseudomonas fluorescens (strain Pf0-1).